Consider the following 445-residue polypeptide: MSTILESLPTGQKVGIAFSGGLDTSAALHWMKLKGAVPYAYTANLGQPDEDDYDAIPKRAIEYGAAGARLIDCRAQLVAEGIAALQSGAFHITTAGVTYFNTTPIGRAVTGTMLVAAMKEDGVNIWGDGSTYKGNDIERFYRYGLLVNPDLKIYKPWLDQTFIDELGGRAEMSEFMNQAGFAYKMSAEKAYSTDSNLLGATHEAKDLESLESGIKIVNPIMGVAFWRDDVKIAAEEVTVRFEAGQPVALNGVEYKDPVELLLEANRIGGRHGLGMSDQIENRIIEAKSRGIYEAPGLALLYIAYERLVTGIHNEDTIEQYRENGRRLGRLLYQGRWFDPQAIMLRETAQRWVARAITGEVKIELRRGNDYSILSTKSPNLTYQPERLSMEKVASTFSPRDRIGQLTMRNLDITDTRDKLRVYSQVGLLTPGESSALPQIKGDSDK.

ATP-binding positions include 17 to 25 and Ala43; that span reads AFSGGLDTS. Tyr99 contacts L-citrulline. ATP contacts are provided by Gly129 and Thr131. Positions 131, 135, and 136 each coordinate L-aspartate. L-citrulline is bound at residue Asn135. Position 136 (Asp136) interacts with ATP. 2 residues coordinate L-citrulline: Arg139 and Ser192. Asp194 lines the ATP pocket. 3 residues coordinate L-citrulline: Thr201, Glu203, and Glu280.

It belongs to the argininosuccinate synthase family. Type 2 subfamily. Homotetramer.

It localises to the cytoplasm. The enzyme catalyses L-citrulline + L-aspartate + ATP = 2-(N(omega)-L-arginino)succinate + AMP + diphosphate + H(+). It participates in amino-acid biosynthesis; L-arginine biosynthesis; L-arginine from L-ornithine and carbamoyl phosphate: step 2/3. The polypeptide is Argininosuccinate synthase (Burkholderia ambifaria (strain ATCC BAA-244 / DSM 16087 / CCUG 44356 / LMG 19182 / AMMD) (Burkholderia cepacia (strain AMMD))).